Consider the following 557-residue polypeptide: Potassium-transporting ATPase potassium-binding subunit (557 aa).

12 helical membrane-spanning segments follow: residues 5–25 (GFLL…PLGS), 63–83 (LSAI…MLLG), 132–152 (GLTV…FAFI), 170–190 (LLRI…LFFI), 253–273 (FVQM…FGEV), 283–303 (LLWA…WAEV), 329–349 (VLVS…AVIA), 356–376 (ALGG…FGGV), 379–399 (GLYG…LMIG), 416–436 (LTAL…ALAM), 484–504 (LLAF…MAIA), and 526–546 (LFVG…FIPA).

Belongs to the KdpA family. As to quaternary structure, the system is composed of three essential subunits: KdpA, KdpB and KdpC.

It is found in the cell inner membrane. Functionally, part of the high-affinity ATP-driven potassium transport (or Kdp) system, which catalyzes the hydrolysis of ATP coupled with the electrogenic transport of potassium into the cytoplasm. This subunit binds the periplasmic potassium ions and delivers the ions to the membrane domain of KdpB through an intramembrane tunnel. The chain is Potassium-transporting ATPase potassium-binding subunit from Escherichia coli (strain SMS-3-5 / SECEC).